A 156-amino-acid polypeptide reads, in one-letter code: Small ribosomal subunit protein uS7 (156 aa).

Belongs to the universal ribosomal protein uS7 family. As to quaternary structure, part of the 30S ribosomal subunit. Contacts proteins S9 and S11.

Functionally, one of the primary rRNA binding proteins, it binds directly to 16S rRNA where it nucleates assembly of the head domain of the 30S subunit. Is located at the subunit interface close to the decoding center, probably blocks exit of the E-site tRNA. The polypeptide is Small ribosomal subunit protein uS7 (Nitrosomonas europaea (strain ATCC 19718 / CIP 103999 / KCTC 2705 / NBRC 14298)).